The primary structure comprises 462 residues: MQVTETLSQGLKREFQVVLPATDLATRLDSQLAEMRAKARINGFRPGKVPVAHLKRLYGRSIMAEVVQEAVNEAHRKIIEDNALRPASQPKIDFPGEKDELEKAFEAKADFAFTVALEVLPKIEIGSFEGVEIERLVAAVSEDEIDLVVNRLAEQSRPYTPKEGDGVVATKGDKATIDFVGKIDGEAFEGGSGEGVDLVLGSGSFIPGFEEQLEGLKLGDSRTVTVTFPDDYSAAHLAGKEAVFDVTLKALAAPGETVIDDAFAKGYGLEDLTKLRESIKANIERDYAAASRRKWKRALLDALDAKYAFDLPEGLVAQEFDAIWRRVEAEQSQSGRSFADEGTTEEAARADYRKIAERRVRLGLLLADVGDAAGVKVADEEVNQALFERARSFPGQEKMVWDYYQKNPSALAELRAPIYEEKVVDHILSLVKVTDKAVPKEELLAADEEDEEEAAESSAALV.

The region spanning 172 to 257 (GDKATIDFVG…LKALAAPGET (86 aa)) is the PPIase FKBP-type domain. The segment at 443-462 (LLAADEEDEEEAAESSAALV) is disordered. Residues 444–455 (LAADEEDEEEAA) show a composition bias toward acidic residues.

This sequence belongs to the FKBP-type PPIase family. Tig subfamily.

The protein resides in the cytoplasm. It carries out the reaction [protein]-peptidylproline (omega=180) = [protein]-peptidylproline (omega=0). Involved in protein export. Acts as a chaperone by maintaining the newly synthesized protein in an open conformation. Functions as a peptidyl-prolyl cis-trans isomerase. The sequence is that of Trigger factor from Methylocella silvestris (strain DSM 15510 / CIP 108128 / LMG 27833 / NCIMB 13906 / BL2).